Reading from the N-terminus, the 461-residue chain is Chromosomal replication initiator protein DnaA (461 aa).

The domain I, interacts with DnaA modulators stretch occupies residues 1–90 (MAVSLWQQCI…RPSARPVAPA (90 aa)). The tract at residues 91 to 124 (PVAAKPVNRQTKAQVGTTSFNTQAEPIINPNHRS) is domain II. Positions 125-341 (NINPTYQFDN…GALNRVIANA (217 aa)) are domain III, AAA+ region. The ATP site is built by glycine 169, glycine 171, lysine 172, and threonine 173. Residues 342 to 461 (NFTGRPITID…YANLIRTLSS (120 aa)) form a domain IV, binds dsDNA region.

The protein belongs to the DnaA family. Oligomerizes as a right-handed, spiral filament on DNA at oriC.

Its subcellular location is the cytoplasm. Plays an essential role in the initiation and regulation of chromosomal replication. ATP-DnaA binds to the origin of replication (oriC) to initiate formation of the DNA replication initiation complex once per cell cycle. Binds the DnaA box (a 9 base pair repeat at the origin) and separates the double-stranded (ds)DNA. Forms a right-handed helical filament on oriC DNA; dsDNA binds to the exterior of the filament while single-stranded (ss)DNA is stabiized in the filament's interior. The ATP-DnaA-oriC complex binds and stabilizes one strand of the AT-rich DNA unwinding element (DUE), permitting loading of DNA polymerase. After initiation quickly degrades to an ADP-DnaA complex that is not apt for DNA replication. Binds acidic phospholipids. The polypeptide is Chromosomal replication initiator protein DnaA (Shewanella frigidimarina (strain NCIMB 400)).